A 1526-amino-acid polypeptide reads, in one-letter code: DNA topoisomerase 2-alpha (1526 aa).

Met-1 bears the N-acetylmethionine mark. The disordered stretch occupies residues 1 to 21 (MELSPLQPVNENMQMNKKKNE). Ser-4 bears the Phosphoserine mark. Lys-17 is covalently cross-linked (Glycyl lysine isopeptide (Lys-Gly) (interchain with G-Cter in SUMO2)). ATP contacts are provided by residues Asn-90, Asn-119, and 147 to 149 (SSN). Residues Lys-155 and Lys-156 each participate in a glycyl lysine isopeptide (Lys-Gly) (interchain with G-Cter in SUMO2) cross-link. 160 to 167 (GRNGYGAK) contributes to the ATP binding site. Lys-260 participates in a covalent cross-link: Glycyl lysine isopeptide (Lys-Gly) (interchain with G-Cter in SUMO2). Thr-281 carries the phosphothreonine modification. The interaction with DNA stretch occupies residues 341-343 (KKK). Lys-351 is covalently cross-linked (Glycyl lysine isopeptide (Lys-Gly) (interchain with G-Cter in SUMO2)). Position 375–377 (375–377 (QTK)) interacts with ATP. Glycyl lysine isopeptide (Lys-Gly) (interchain with G-Cter in SUMO2) cross-links involve residues Lys-385, Lys-396, Lys-415, Lys-417, Lys-424, and Lys-439. The Toprim domain maps to 454–571 (CTLILTEGDS…SLLRHRFLEE (118 aa)). Glu-460 contributes to the Mg(2+) binding site. Glycyl lysine isopeptide (Lys-Gly) (interchain with G-Cter in SUMO2) cross-links involve residues Lys-465, Lys-479, and Lys-528. Residues Asp-540 and Asp-542 each coordinate Mg(2+). Residues Lys-583, Lys-598, Lys-613, Lys-621, Lys-624, Lys-631, Lys-638, Lys-654, Lys-661, and Lys-675 each participate in a glycyl lysine isopeptide (Lys-Gly) (interchain with G-Cter in SUMO2) cross-link. Residues 714-1166 (IPSMVDGLKP…SPSDLWKEDL (453 aa)) form the Topo IIA-type catalytic domain. The active-site O-(5'-phospho-DNA)-tyrosine intermediate is Tyr-804. The segment at 989-998 (KLQTSLTCNS) is interaction with DNA. Lys-1074 is covalently cross-linked (Glycyl lysine isopeptide (Lys-Gly) (interchain with G-Cter in SUMO2)). Disordered regions lie at residues 1089–1117 (WKEAQQKVPDEEENEESDNENSDSVAESG) and 1180–1217 (EKQDEQVGLPGKGGKAKGKKAQMSEVLPSPHGKRVIPQ). Residues 1098-1109 (DEEENEESDNEN) show a composition bias toward acidic residues. Ser-1105 is subject to Phosphoserine; by CK1. Residues Lys-1191 and Lys-1199 each participate in a glycyl lysine isopeptide (Lys-Gly) (interchain with G-Cter in SUMO2) cross-link. At Ser-1208 the chain carries Phosphoserine. Lys-1223 participates in a covalent cross-link: Glycyl lysine isopeptide (Lys-Gly) (interchain with G-Cter in SUMO2). Residues 1233–1526 (KIKSENVEGT…LEESDDDDLF (294 aa)) are disordered. A Glycyl lysine isopeptide (Lys-Gly) (interchain with G-Cter in SUMO1); alternate cross-link involves residue Lys-1235. Lys-1235 participates in a covalent cross-link: Glycyl lysine isopeptide (Lys-Gly) (interchain with G-Cter in SUMO2); alternate. Thr-1242 bears the Phosphothreonine mark. Lys-1254 is covalently cross-linked (Glycyl lysine isopeptide (Lys-Gly) (interchain with G-Cter in SUMO2)). A compositionally biased stretch (basic and acidic residues) spans 1255-1265 (QRIEKKQKKEP). Residues Lys-1271, Lys-1278, and Lys-1281 each participate in a glycyl lysine isopeptide (Lys-Gly) (interchain with G-Cter in SUMO2) cross-link. Residues Ser-1290, Ser-1292, Ser-1294, and Ser-1297 each carry the phosphoserine modification. Thr-1322 carries the post-translational modification Phosphothreonine. Acidic residues predominate over residues 1325 to 1344 (LDSDEDFSGSDGKDEDEDFF). Residues Ser-1327 and Ser-1332 each carry the phosphoserine modification. A Phosphothreonine modification is found at Thr-1349. Residues Lys-1358, Lys-1362, and Lys-1368 each participate in a glycyl lysine isopeptide (Lys-Gly) (interchain with G-Cter in SUMO2) cross-link. Phosphoserine occurs at positions 1369 and 1372. Residue Lys-1380 forms a Glycyl lysine isopeptide (Lys-Gly) (interchain with G-Cter in SUMO2) linkage. Phosphoserine is present on residues Ser-1382 and Ser-1386. Residues 1405–1426 (SKQTVAVKKTATKSQSSTSTAG) are compositionally biased toward low complexity. Residue Lys-1417 forms a Glycyl lysine isopeptide (Lys-Gly) (interchain with G-Cter in SUMO2); alternate linkage. Lys-1417 carries the post-translational modification N6-acetyllysine; alternate. An interaction with PLSCR1 region spans residues 1428-1434 (KKRAVPK). Lys-1437 is covalently cross-linked (Glycyl lysine isopeptide (Lys-Gly) (interchain with G-Cter in SUMO2); alternate). Position 1437 is an N6-acetyllysine; alternate (Lys-1437). Residues Lys-1449 and Lys-1454 each participate in a glycyl lysine isopeptide (Lys-Gly) (interchain with G-Cter in SUMO2) cross-link. Ser-1464, Ser-1466, Ser-1469, and Ser-1471 each carry phosphoserine. Residues Lys-1479 and Lys-1487 each participate in a glycyl lysine isopeptide (Lys-Gly) (interchain with G-Cter in SUMO2) cross-link. Basic and acidic residues predominate over residues 1486–1497 (SKGENQDFRVDL). Ser-1520 bears the Phosphoserine mark.

Belongs to the type II topoisomerase family. Homodimer. Interacts with COPS5. Interacts with RECQL5; this stimulates DNA decatenation. Interacts with SETMAR; stimulates the topoisomerase activity. Interacts with DHX9; this interaction occurs in a E2 enzyme UBE2I- and RNA-dependent manner, negatively regulates DHX9-mediated double-stranded DNA and RNA duplex helicase activity and stimulates TOP2A-mediated supercoiled DNA relaxation activity. Interacts with HNRNPU (via C-terminus); this interaction protects the topoisomerase TOP2A from degradation and positively regulates the relaxation of supercoiled DNA in a RNA-dependent manner. Interacts with MCM3AP. Interacts with ERCC6. Interacts with PLSCR1. Interacts with GCNA; this interaction allows the resolution of topoisomerase II (TOP2A) DNA-protein cross-links. Interacts with POL1RA/RPA1 (via dock II) and UBTF in the context of Pol I complex; may assist Pol I transcription initiation by releasing supercoils occurring during DNA unwinding. Interacts with TPRN; TPRN interacts with a number of DNA damage response proteins, is recruited to sites of DNA damage and may play a role in DNA damage repair. Mg(2+) serves as cofactor. Requires Mn(2+) as cofactor. The cofactor is Ca(2+). Phosphorylation has no effect on catalytic activity. However, phosphorylation at Ser-1105 by CSNK1D/CK1 promotes DNA cleavable complex formation.

The protein localises to the cytoplasm. It localises to the nucleus. It is found in the nucleoplasm. The protein resides in the nucleolus. It catalyses the reaction ATP-dependent breakage, passage and rejoining of double-stranded DNA.. In terms of biological role, key decatenating enzyme that alters DNA topology by binding to two double-stranded DNA molecules, generating a double-stranded break in one of the strands, passing the intact strand through the broken strand, and religating the broken strand. May play a role in regulating the period length of BMAL1 transcriptional oscillation. This Cricetulus griseus (Chinese hamster) protein is DNA topoisomerase 2-alpha (TOP2A).